Here is a 157-residue protein sequence, read N- to C-terminus: 2-C-methyl-D-erythritol 2,4-cyclodiphosphate synthase (157 aa).

A divalent metal cation is bound by residues Asp8 and His10. 4-CDP-2-C-methyl-D-erythritol 2-phosphate contacts are provided by residues Asp8–His10 and His34–Ser35. His42 serves as a coordination point for a divalent metal cation. Residues Asp56–Gly58, Phe61–Asp65, Ala100–Ala106, Thr132–Glu135, Phe139, and Arg142 contribute to the 4-CDP-2-C-methyl-D-erythritol 2-phosphate site.

This sequence belongs to the IspF family. In terms of assembly, homotrimer. A divalent metal cation serves as cofactor.

The catalysed reaction is 4-CDP-2-C-methyl-D-erythritol 2-phosphate = 2-C-methyl-D-erythritol 2,4-cyclic diphosphate + CMP. It functions in the pathway isoprenoid biosynthesis; isopentenyl diphosphate biosynthesis via DXP pathway; isopentenyl diphosphate from 1-deoxy-D-xylulose 5-phosphate: step 4/6. Its function is as follows. Involved in the biosynthesis of isopentenyl diphosphate (IPP) and dimethylallyl diphosphate (DMAPP), two major building blocks of isoprenoid compounds. Catalyzes the conversion of 4-diphosphocytidyl-2-C-methyl-D-erythritol 2-phosphate (CDP-ME2P) to 2-C-methyl-D-erythritol 2,4-cyclodiphosphate (ME-CPP) with a corresponding release of cytidine 5-monophosphate (CMP). The chain is 2-C-methyl-D-erythritol 2,4-cyclodiphosphate synthase from Pseudomonas aeruginosa (strain ATCC 15692 / DSM 22644 / CIP 104116 / JCM 14847 / LMG 12228 / 1C / PRS 101 / PAO1).